The following is a 149-amino-acid chain: Large ribosomal subunit protein uL13 (149 aa).

The protein belongs to the universal ribosomal protein uL13 family. In terms of assembly, part of the 50S ribosomal subunit.

Functionally, this protein is one of the early assembly proteins of the 50S ribosomal subunit, although it is not seen to bind rRNA by itself. It is important during the early stages of 50S assembly. The sequence is that of Large ribosomal subunit protein uL13 from Thermotoga maritima (strain ATCC 43589 / DSM 3109 / JCM 10099 / NBRC 100826 / MSB8).